The sequence spans 338 residues: Anthranilate phosphoribosyltransferase (338 aa).

Residues glycine 81, 84 to 85 (GD), threonine 89, 91 to 94 (NIST), 109 to 117 (KHGNRNLSS), and alanine 121 contribute to the 5-phospho-alpha-D-ribose 1-diphosphate site. Anthranilate is bound at residue glycine 81. Residue serine 93 participates in Mg(2+) binding. Asparagine 112 is a binding site for anthranilate. Residue arginine 167 coordinates anthranilate. Residues aspartate 226 and glutamate 227 each contribute to the Mg(2+) site.

This sequence belongs to the anthranilate phosphoribosyltransferase family. In terms of assembly, homodimer. It depends on Mg(2+) as a cofactor.

The catalysed reaction is N-(5-phospho-beta-D-ribosyl)anthranilate + diphosphate = 5-phospho-alpha-D-ribose 1-diphosphate + anthranilate. Its pathway is amino-acid biosynthesis; L-tryptophan biosynthesis; L-tryptophan from chorismate: step 2/5. Its function is as follows. Catalyzes the transfer of the phosphoribosyl group of 5-phosphorylribose-1-pyrophosphate (PRPP) to anthranilate to yield N-(5'-phosphoribosyl)-anthranilate (PRA). The polypeptide is Anthranilate phosphoribosyltransferase (Cereibacter sphaeroides (strain KD131 / KCTC 12085) (Rhodobacter sphaeroides)).